The primary structure comprises 787 residues: Endonuclease MutS2 (787 aa).

335 to 342 (GPNTGGKT) is an ATP binding site. One can recognise a Smr domain in the interval 712 to 787 (LDLRGERYED…GLGNTVIELK (76 aa)).

It belongs to the DNA mismatch repair MutS family. MutS2 subfamily. As to quaternary structure, homodimer. Binds to stalled ribosomes, contacting rRNA.

Its function is as follows. Endonuclease that is involved in the suppression of homologous recombination and thus may have a key role in the control of bacterial genetic diversity. Functionally, acts as a ribosome collision sensor, splitting the ribosome into its 2 subunits. Detects stalled/collided 70S ribosomes which it binds and splits by an ATP-hydrolysis driven conformational change. Acts upstream of the ribosome quality control system (RQC), a ribosome-associated complex that mediates the extraction of incompletely synthesized nascent chains from stalled ribosomes and their subsequent degradation. Probably generates substrates for RQC. The polypeptide is Endonuclease MutS2 (Shouchella clausii (strain KSM-K16) (Alkalihalobacillus clausii)).